The following is a 235-amino-acid chain: Probable carboxylesterase Os04g0669600 (235 aa).

Catalysis depends on charge relay system residues Ser-113, Asp-167, and His-199.

The protein belongs to the AB hydrolase superfamily. AB hydrolase 2 family.

Possesses carboxylesterase activity in vitro. In Oryza sativa subsp. japonica (Rice), this protein is Probable carboxylesterase Os04g0669600.